Reading from the N-terminus, the 627-residue chain is Asparagine synthetase domain-containing protein 1 (627 aa).

The active-site For GATase activity is the Cys-2. Positions 2–184 constitute a Glutamine amidotransferase type-2 domain; the sequence is CGICCSVSFS…ASGIFQIDLN (183 aa). The Asparagine synthetase domain occupies 308–597; sequence ASKEVLKTCS…GLPASALLPK (290 aa). Residues 373-404 are disordered; it reads QQNHHEIPSEESSQSPAADEGPGEAEVPDRVT.

The sequence is that of Asparagine synthetase domain-containing protein 1 (Asnsd1) from Mus musculus (Mouse).